Consider the following 376-residue polypeptide: Chaperone protein DnaJ (376 aa).

Residues 5–70 (DYYEVLGVAK…QKRAAYDQYG (66 aa)) enclose the J domain. A CR-type zinc finger spans residues 136 to 214 (GYDTQIRVPS…CHGSGKVKET (79 aa)). Zn(2+) is bound by residues Cys149, Cys152, Cys166, Cys169, Cys188, Cys191, Cys202, and Cys205. CXXCXGXG motif repeat units lie at residues 149–156 (CGICHGSG), 166–173 (CPTCHGQG), 188–195 (CPKCHGTG), and 202–209 (CVHCHGSG).

This sequence belongs to the DnaJ family. In terms of assembly, homodimer. The cofactor is Zn(2+).

The protein localises to the cytoplasm. Participates actively in the response to hyperosmotic and heat shock by preventing the aggregation of stress-denatured proteins and by disaggregating proteins, also in an autonomous, DnaK-independent fashion. Unfolded proteins bind initially to DnaJ; upon interaction with the DnaJ-bound protein, DnaK hydrolyzes its bound ATP, resulting in the formation of a stable complex. GrpE releases ADP from DnaK; ATP binding to DnaK triggers the release of the substrate protein, thus completing the reaction cycle. Several rounds of ATP-dependent interactions between DnaJ, DnaK and GrpE are required for fully efficient folding. Also involved, together with DnaK and GrpE, in the DNA replication of plasmids through activation of initiation proteins. The chain is Chaperone protein DnaJ from Burkholderia thailandensis (strain ATCC 700388 / DSM 13276 / CCUG 48851 / CIP 106301 / E264).